The chain runs to 177 residues: dCTP deaminase, dUMP-forming (177 aa).

DCTP is bound by residues 95 to 100, Asp112, 120 to 122, Gln141, Tyr155, and Gln162; these read RSSLGR and TLE. Glu122 serves as the catalytic Proton donor/acceptor.

It belongs to the dCTP deaminase family. In terms of assembly, homotrimer.

The catalysed reaction is dCTP + 2 H2O = dUMP + NH4(+) + diphosphate. It functions in the pathway pyrimidine metabolism; dUMP biosynthesis; dUMP from dCTP: step 1/1. Bifunctional enzyme that catalyzes both the deamination of dCTP to dUTP and the hydrolysis of dUTP to dUMP without releasing the toxic dUTP intermediate. This Hydrogenobaculum sp. (strain Y04AAS1) protein is dCTP deaminase, dUMP-forming.